A 140-amino-acid chain; its full sequence is Protein archease (140 aa).

Ca(2+) contacts are provided by Asp-12, Asp-139, and Leu-140.

Belongs to the archease family.

Functionally, activates the tRNA-splicing ligase complex by facilitating the enzymatic turnover of catalytic subunit RtcB. Acts by promoting the guanylylation of RtcB, a key intermediate step in tRNA ligation. Can also alter the NTP specificity of RtcB such that ATP, dGTP or ITP is used efficiently. May also act as a chaperone or modulator of proteins involved in DNA or RNA processing. The polypeptide is Protein archease (Methanothermobacter thermautotrophicus (strain ATCC 29096 / DSM 1053 / JCM 10044 / NBRC 100330 / Delta H) (Methanobacterium thermoautotrophicum)).